The sequence spans 198 residues: 3-isopropylmalate dehydratase small subunit (198 aa).

This sequence belongs to the LeuD family. LeuD type 1 subfamily. Heterodimer of LeuC and LeuD.

The catalysed reaction is (2R,3S)-3-isopropylmalate = (2S)-2-isopropylmalate. It functions in the pathway amino-acid biosynthesis; L-leucine biosynthesis; L-leucine from 3-methyl-2-oxobutanoate: step 2/4. Functionally, catalyzes the isomerization between 2-isopropylmalate and 3-isopropylmalate, via the formation of 2-isopropylmaleate. The protein is 3-isopropylmalate dehydratase small subunit of Corynebacterium jeikeium (strain K411).